Reading from the N-terminus, the 130-residue chain is DNA-directed RNA polymerase subunit omega (130 aa).

Disordered stretches follow at residues 79–98 and 108–130; these read EPES…VDAD and TEEE…EEDE.

Belongs to the RNA polymerase subunit omega family. As to quaternary structure, the RNAP catalytic core consists of 2 alpha, 1 beta, 1 beta' and 1 omega subunit. When a sigma factor is associated with the core the holoenzyme is formed, which can initiate transcription.

It catalyses the reaction RNA(n) + a ribonucleoside 5'-triphosphate = RNA(n+1) + diphosphate. Promotes RNA polymerase assembly. Latches the N- and C-terminal regions of the beta' subunit thereby facilitating its interaction with the beta and alpha subunits. The chain is DNA-directed RNA polymerase subunit omega from Nitrobacter winogradskyi (strain ATCC 25391 / DSM 10237 / CIP 104748 / NCIMB 11846 / Nb-255).